Here is a 302-residue protein sequence, read N- to C-terminus: Ribostamycin:4-(gamma-L-glutamylamino)-(S)-2-hydroxybutanoyl-[BtrI acyl-carrier protein] 4-(gamma-L-glutamylamino)-(S)-2-hydroxybutanoate transferase (302 aa).

It carries out the reaction 4-(gamma-L-glutamylamino)-(2S)-2-hydroxybutanoyl-[BtrI ACP] + ribostamycin = gamma-L-glutamyl-butirosin B + holo-[BtrI ACP] + H(+). Its pathway is antibiotic biosynthesis; butirosin biosynthesis. In terms of biological role, aminoglycoside acyltransferase that attaches the (S)-4-amino-2-hydroxybutyrate (AHBA) side chain from the acyl carrier protein BtrI to the aminoglycoside ribostamycin in the biosynthetic pathway of butirosin. The AHBA side chain protects the antibiotic from several common resistance mechanisms. The protein is Ribostamycin:4-(gamma-L-glutamylamino)-(S)-2-hydroxybutanoyl-[BtrI acyl-carrier protein] 4-(gamma-L-glutamylamino)-(S)-2-hydroxybutanoate transferase (btrH) of Niallia circulans (Bacillus circulans).